The chain runs to 436 residues: 3-ketoacyl-CoA thiolase (436 aa).

Cys99 functions as the Acyl-thioester intermediate in the catalytic mechanism. Active-site proton acceptor residues include His392 and Cys422.

It belongs to the thiolase-like superfamily. Thiolase family. Heterotetramer of two alpha chains (FadJ) and two beta chains (FadI).

The protein resides in the cytoplasm. It catalyses the reaction an acyl-CoA + acetyl-CoA = a 3-oxoacyl-CoA + CoA. Its pathway is lipid metabolism; fatty acid beta-oxidation. In terms of biological role, catalyzes the final step of fatty acid oxidation in which acetyl-CoA is released and the CoA ester of a fatty acid two carbons shorter is formed. This Photorhabdus laumondii subsp. laumondii (strain DSM 15139 / CIP 105565 / TT01) (Photorhabdus luminescens subsp. laumondii) protein is 3-ketoacyl-CoA thiolase.